Here is a 381-residue protein sequence, read N- to C-terminus: Neuropeptide Y receptor type 2 (381 aa).

The segment at 1 to 37 (MGPIGTEADENQTVEEIKVEPYGPGHTTPRGELAPDP) is disordered. Topologically, residues 1–52 (MGPIGTEADENQTVEEIKVEPYGPGHTTPRGELAPDPEPELIDSTKLTEVRV) are extracellular. The N-linked (GlcNAc...) asparagine glycan is linked to Asn11. Residues 53 to 73 (VLILAYCSIILLGVVGNSLVI) traverse the membrane as a helical segment. Topologically, residues 74–87 (HVVIKFKSMRTVTN) are cytoplasmic. The chain crosses the membrane as a helical span at residues 88–108 (FFIANLAVADLLVNTLCLPFT). Residues 109–125 (LTYTLMGEWKMGPVLCH) lie on the Extracellular side of the membrane. Cys124 and Cys204 are joined by a disulfide. A helical transmembrane segment spans residues 126-146 (LVPYAQGLAVQVSTVTLTVIA). At 147 to 166 (LDRHRCIVYHLDSKISKQNS) the chain is on the cytoplasmic side. The chain crosses the membrane as a helical span at residues 167-187 (FLIIGLAWGISALLASPLAIF). Residues 188–217 (REYSLIEIIPDFEIVACTEKWPGEEKSIYG) lie on the Extracellular side of the membrane. A helical transmembrane segment spans residues 218–238 (TVYSLSSLLILYVLPLGIISV). Residues 239-269 (SYVRIWSKLKNHVSPGAANDHYHQRRQKTTK) lie on the Cytoplasmic side of the membrane. The chain crosses the membrane as a helical span at residues 270–290 (MLVFVVVVFAVSWLPLHAFQL). Over 291-305 (AVDIDSQVLDLKEYK) the chain is Extracellular. Residues 306–326 (LIFTVFHIIAMCSTFANPLLY) traverse the membrane as a helical segment. At 327–381 (GWMNSNYRKAFLSAFRCQQRLDAIQSEVCVTGKAKTNVEVEKNHGAADSAEATNV) the chain is on the cytoplasmic side. Cys343 is lipidated: S-palmitoyl cysteine.

This sequence belongs to the G-protein coupled receptor 1 family.

Its subcellular location is the cell membrane. In terms of biological role, receptor for neuropeptide Y and peptide YY. In Cavia porcellus (Guinea pig), this protein is Neuropeptide Y receptor type 2 (NPY2R).